We begin with the raw amino-acid sequence, 156 residues long: Small ribosomal subunit protein uS7A/uS7B (156 aa).

Belongs to the universal ribosomal protein uS7 family. Part of the 30S ribosomal subunit. Contacts proteins S9 and S11.

Functionally, one of the primary rRNA binding proteins, it binds directly to 16S rRNA where it nucleates assembly of the head domain of the 30S subunit. Is located at the subunit interface close to the decoding center, probably blocks exit of the E-site tRNA. This chain is Small ribosomal subunit protein uS7A/uS7B, found in Bartonella bacilliformis (strain ATCC 35685 / KC583 / Herrer 020/F12,63).